Consider the following 218-residue polypeptide: Probable transaldolase 2 (218 aa).

K83 acts as the Schiff-base intermediate with substrate in catalysis.

This sequence belongs to the transaldolase family. Type 3B subfamily.

It localises to the cytoplasm. The enzyme catalyses D-sedoheptulose 7-phosphate + D-glyceraldehyde 3-phosphate = D-erythrose 4-phosphate + beta-D-fructose 6-phosphate. Its pathway is carbohydrate degradation; pentose phosphate pathway; D-glyceraldehyde 3-phosphate and beta-D-fructose 6-phosphate from D-ribose 5-phosphate and D-xylulose 5-phosphate (non-oxidative stage): step 2/3. Functionally, transaldolase is important for the balance of metabolites in the pentose-phosphate pathway. This is Probable transaldolase 2 from Listeria innocua serovar 6a (strain ATCC BAA-680 / CLIP 11262).